Reading from the N-terminus, the 236-residue chain is Pyridoxal phosphate homeostasis protein (236 aa).

K36 is subject to N6-(pyridoxal phosphate)lysine.

This sequence belongs to the pyridoxal phosphate-binding protein YggS/PROSC family.

Its function is as follows. Pyridoxal 5'-phosphate (PLP)-binding protein, which is involved in PLP homeostasis. This Vibrio cholerae serotype O1 (strain ATCC 39315 / El Tor Inaba N16961) protein is Pyridoxal phosphate homeostasis protein.